Reading from the N-terminus, the 394-residue chain is Elongation factor Tu (394 aa).

Residues 10–204 form the tr-type G domain; sequence KPHINVGTIG…ALDNYIPEPK (195 aa). The tract at residues 19–26 is G1; it reads GHVDHGKT. 19-26 is a GTP binding site; sequence GHVDHGKT. Residue threonine 26 participates in Mg(2+) binding. Residues 60–64 form a G2 region; the sequence is GITIN. The G3 stretch occupies residues 81 to 84; that stretch reads DCPG. GTP contacts are provided by residues 81–85 and 136–139; these read DCPGH and NKCD. The tract at residues 136–139 is G4; that stretch reads NKCD. The interval 174–176 is G5; that stretch reads SAL.

This sequence belongs to the TRAFAC class translation factor GTPase superfamily. Classic translation factor GTPase family. EF-Tu/EF-1A subfamily. In terms of assembly, monomer.

The protein resides in the cytoplasm. The enzyme catalyses GTP + H2O = GDP + phosphate + H(+). Its function is as follows. GTP hydrolase that promotes the GTP-dependent binding of aminoacyl-tRNA to the A-site of ribosomes during protein biosynthesis. This Blochmanniella pennsylvanica (strain BPEN) protein is Elongation factor Tu.